The primary structure comprises 108 residues: Complement inhibitor CirpT4 (108 aa).

The N-terminal stretch at 1-19 is a signal peptide; the sequence is MRAFVALFCTLVAFATVIC. Cystine bridges form between C40–C64, C59–C98, C76–C99, and C85–C104.

This sequence belongs to the CirpT family. As to expression, expressed in salivary glands.

Its subcellular location is the secreted. In terms of biological role, complement inhibitor. Prevents complement-mediated activation of C5 by sterically preventing direct binding of C5 to its convertase (binding with domains MG4 and MG5). Binds C5 at a different binding site than the other tick complement inhibitors OmCI and RaCI3, and the drug eculizumab. Inhibits the complement in human, rat and guinea pig, and also shows a reduced inhibition in rabbit and pig. This chain is Complement inhibitor CirpT4, found in Amblyomma americanum (Lone star tick).